The following is a 164-amino-acid chain: Phosphopantetheine adenylyltransferase (164 aa).

Ser-11 contributes to the substrate binding site. ATP contacts are provided by residues 11–12 (SF) and His-19. Substrate-binding residues include Lys-43, Ala-76, and Arg-90. ATP-binding positions include 91 to 93 (GLR), Glu-101, and 126 to 132 (YQHISSS).

It belongs to the bacterial CoaD family. Homohexamer. Mg(2+) is required as a cofactor.

Its subcellular location is the cytoplasm. It catalyses the reaction (R)-4'-phosphopantetheine + ATP + H(+) = 3'-dephospho-CoA + diphosphate. It functions in the pathway cofactor biosynthesis; coenzyme A biosynthesis; CoA from (R)-pantothenate: step 4/5. Reversibly transfers an adenylyl group from ATP to 4'-phosphopantetheine, yielding dephospho-CoA (dPCoA) and pyrophosphate. The sequence is that of Phosphopantetheine adenylyltransferase from Streptococcus sanguinis (strain SK36).